The primary structure comprises 569 residues: Urease subunit alpha (569 aa).

Residues 131-569 (GGFDSHIHFI…LPMAQRYFLF (439 aa)) enclose the Urease domain. Residues H136, H138, and K219 each contribute to the Ni(2+) site. At K219 the chain carries N6-carboxylysine. H221 is a binding site for substrate. H248 and H274 together coordinate Ni(2+). H322 functions as the Proton donor in the catalytic mechanism. Position 362 (D362) interacts with Ni(2+).

It belongs to the metallo-dependent hydrolases superfamily. Urease alpha subunit family. In terms of assembly, heterotrimer of UreA (gamma), UreB (beta) and UreC (alpha) subunits. Three heterotrimers associate to form the active enzyme. The cofactor is Ni cation. Carboxylation allows a single lysine to coordinate two nickel ions.

Its subcellular location is the cytoplasm. It carries out the reaction urea + 2 H2O + H(+) = hydrogencarbonate + 2 NH4(+). It functions in the pathway nitrogen metabolism; urea degradation; CO(2) and NH(3) from urea (urease route): step 1/1. In Roseobacter denitrificans (strain ATCC 33942 / OCh 114) (Erythrobacter sp. (strain OCh 114)), this protein is Urease subunit alpha.